We begin with the raw amino-acid sequence, 2616 residues long: MNYNMDEMEATRLLRHPRRWWSIGFGKRIVAISILVIIVLLFSLVYHGLVVEKIDQVQQIAALNARHQVLFNQPFEEDQSALIVSPQTLHFKLLDEDMNKDMEDSKNRRRKHMRQMLVKFRLNKKHRMRRDLHGLDLLDPVRMEANMQHLYTKLRSKRAREALSQLEHEFVRCKKHTPQDCMSAFLRMYKMAKEVTEKMEKMKAIMREQQPKLESSSMESHEQKGTFSPADLIQVTTAEATTVAVHATEKPARTKIKPSRISWIIDGHDHDESPVYTDGAPKKETTKAPWNTTQLVEITTTKIDATATERTTVESTTEKISWILDHFDKPQEILRTTEGPGQRIIRNVTTTSASSEPIVDTENTNSDHVPTTENGLVFNITTDGPVETTKSTAQRKLSFDWILDGEENVEPEVKSTNTTTTTAATTTTGATSETIIVTTELPKITFDWIIDGREVVEPQETTTEVTGTTERLRKMPFDWIIDGEEVVEPQENVTTTTIATTVAVSTTEINERIHNSTAYPTKPKPVKFDWIIDGGESSGEVSTSSTSQPKLTTREAISNPESPRSSHPLDNPTSIENMLESFEQHEEQKPILRVLNANESSSETVTDGYERQLWLKKFEDQARPNQNELIDTFGTALDAKALDKMGPKINPLNGHTWNAADAQILSLCERVALRMRNKVATMSDGETKEKGETFTASPSVQFTSRAPGGFPVSGETMKASAQFMFNPNFGMPSIPVCFYMTPANFRMPMWSNTPTFMGMQGAHFGGSSNPGAGIFFVPQQFGPSGNFFGGSGGSGAGGQGANIFSKNASPQKPTNGQQQVYCSYMQNQSGQGAGQSQTSSQQQQGGQSAFSNANFKMRHANQTNTANQQGQIIYASYAGLPQQPIQERSRCPEPDQFSCFGQQECIPAARWCDNVVDCSDGSDESACTCADRVDEERLCDGYEDCPMGEDELGCFGCESLAYSCYENPQDFAKRNRSTISMCYSRLERCDGFMNCLNGRDEEQCSMLVTDVADHMSHGASASEGYLYHNYRGDWHPVCNNGEKWAALACQMDENSRMDHSASLNVSFQTLTLPGPFIEPSLHAGVHFAQACHGRNSHDSLVDHVAYVKCPPMQCGLPSKSSMLEHSKRVRRAVSDSKEIVGDGRIVGGSYTSALQWPFVVAIYRNGKFHCGGTIYSDRWIISAAHCVINYGKYFYEVRAGLLRRSSYSPATQIQPVSHVVVHQAYERRSMRNDLSLLRLLNPLQFNRWVKPICLPDKGRTTVGDDWIWGPVEHTLCTVVGWGAIREKGPSSDPMRQVIVPIRKKCTDPEDQASEDICAGDPDGGRDACQGDSGGPLFCRSVSNPDEFYLAGVVSHGNGCARPQEFGVYTRVTLYLDWLEMATTPRLLPKLQPLQLCPGFICVWGGKRCIAKRQRCDRNVDCLGGEDEVGCTYNFLPDMVGGVRQNISTTTESDYHPVKESEEKSKMREVIPIDDEDLKAEQDEEDLLKSTTSLGQTETTQGPMDLSFAEQITSTTSDDLSITDETTSTDFTVSDSATSPSTLLPTTTNPSTWLPSTNIETSTFSFTTTESEASTKQETLPTTVAQTTTIPTSTEDLKKLTDLVTEFIESTTFETTMEVETTTLSLTSTDAPKLVTTEGVKETTTTEDTTTISSIVTLTTTPLATISTTILTTEKHVAVTTLAPTTTTESAKTTTTHSSSTHSEKDQIQIPNKFVCKKMSQIVDIMMRCDRKVDCEDGTDELDCTCKDYLKGSLKGLICDGKADCEDLTDEQNCVECQSNEFRCPLSKTCLPLSSRCDNKVDCKFKEDEKDCFALTNGHDVHFDVHQQPKFSSTGIFSRNGHGVWRVVCAHETGYHEHQAKTADAVCALLGFNGAHYFNSSEFVTQHEMQPITPELKGGRNRMSAQIHSMVGDNVQFTENEVIIPELGHPSASRPEKDRLLPRKCVGIYVECNPYSNKTTPLKTFSAGQVVKEKPIEQVPVLSPTIETHNTPNVHFKPQIPAMVVNKKDEILDRLDKLIKSKKNKTILVNEQLHEAIEELHWPWLADVYMNGDLWCIGVLIDKHWVMVHESCLSGIDLETHYVSVLLGGGKTKRSAHRSNHEQIRRVDCFEGVPKSNVLLLHLERPVRFTHHVLPTFLPDSSHQNQSHARQCISVLHDDATGRIKTVAITRIHNATNCDSCYKLQEKQPPANLMRLLNVSAEDMASISEEVELINGVAPTELPAITKFTTCNQFGLKNVSDAHHNPSDQGVLVCRDSHTGWFPTALFNYNNSDCQSFKQPFGIRTLELVYKSLQDIIDKPSCKMLLPAPDCSTHRCPLGTCLPQAAMCNGRSDCHDGSDEEETKCRQQKQQCAPGEMKCRTSFKCVPKSKFCDHVPDCEDMTDEPTICSCFTYLQATDPSKICDGKRNCWDKSDESSVLCNCTADHFQCSSSPEDCIPRDFVCDKEKDCPNGEDERYCFGIEHPLHLQKKDFWTNSQHTQPEIAPQYGQVIEQTYGIWHTKCFPKSKPPQVDEVREICKKLGYNPYRQPSYRLIDDEENKPVHTYELADRQGRSFSNESLMGKYRDSTKALIISKFSPLQLNERLTLFLKSSRPIAELVRWNATDSSMCYRLEIRCA.

The signal sequence occupies residues 1–43; it reads MNYNMDEMEATRLLRHPRRWWSIGFGKRIVAISILVIIVLLFS. 2 positions are modified to phosphoserine: Ser-215 and Ser-220. The stretch at 261 to 269 is one WIID 1 repeat; it reads ISWIIDGHD. An N-linked (GlcNAc...) asparagine glycan is attached at Asn-291. Residues 320-328 form a WIID 2 repeat; that stretch reads ISWILDHFD. The N-linked (GlcNAc...) asparagine glycan is linked to Asn-347. The tract at residues 352–375 is disordered; the sequence is SASSEPIVDTENTNSDHVPTTENG. An N-linked (GlcNAc...) asparagine glycan is attached at Asn-379. The WIID 3 repeat unit spans residues 399 to 407; it reads FDWILDGEE. Asn-417 carries N-linked (GlcNAc...) asparagine glycosylation. 2 WIID repeats span residues 446 to 454 and 477 to 485; these read FDWIIDGRE and FDWIIDGEE. Asn-492 and Asn-515 each carry an N-linked (GlcNAc...) asparagine glycan. The stretch at 528–536 is one WIID 6 repeat; the sequence is FDWIIDGGE. Over residues 537-547 the composition is skewed to low complexity; sequence SSGEVSTSSTS. A disordered region spans residues 537–574; that stretch reads SSGEVSTSSTSQPKLTTREAISNPESPRSSHPLDNPTS. Residues 548 to 565 are compositionally biased toward polar residues; that stretch reads QPKLTTREAISNPESPRS. A phosphoserine mark is found at Ser-574 and Ser-581. Asn-598 carries an N-linked (GlcNAc...) asparagine glycan. An O-linked (Xyl...) (glycosaminoglycan) serine glycan is attached at Ser-794. The interval 798 to 817 is disordered; sequence GQGANIFSKNASPQKPTNGQ. The span at 804–817 shows a compositional bias: polar residues; that stretch reads FSKNASPQKPTNGQ. The N-linked (GlcNAc...) asparagine glycan is linked to Asn-827. Ser-829 carries O-linked (Xyl...) (glycosaminoglycan) serine glycosylation. N-linked (GlcNAc...) asparagine glycosylation occurs at Asn-861. LDL-receptor class A domains follow at residues 889 to 929 and 955 to 1006; these read SRCP…ACTC and FGCE…QCSM. Intrachain disulfides connect Cys-891–Cys-905, Cys-899–Cys-918, and Cys-912–Cys-927. The 28-residue stretch at 929-956 folds into the LDL-receptor class A 2; truncated domain; that stretch reads CADRVDEERLCDGYEDCPMGEDELGCFG. Disulfide bonds link Cys-957–Cys-982, Cys-964–Cys-995, and Cys-989–Cys-1004. N-linked (GlcNAc...) asparagine glycosylation is present at Asn-975. The short motif at 1031-1033 is the Cell attachment site element; that stretch reads RGD. N-linked (GlcNAc...) asparagine glycosylation is present at Asn-1064. A phosphoserine mark is found at Ser-1134 and Ser-1136. The Peptidase S1 1 domain occupies 1145 to 1383; sequence IVGGSYTSAL…YLDWLEMATT (239 aa). Cys-1170 and Cys-1186 are oxidised to a cystine. Active-site charge relay system residues include His-1185 and Asp-1233. 6 disulfide bridges follow: Cys-1276-Cys-1338, Cys-1305-Cys-1317, Cys-1328-Cys-1359, Cys-1396-Cys-1408, Cys-1401-Cys-1421, and Cys-1415-Cys-1430. Ser-1332 (charge relay system) is an active-site residue. Positions 1394–1432 constitute an LDL-receptor class A 4 domain; the sequence is QLCPGFICVWGGKRCIAKRQRCDRNVDCLGGEDEVGCTY. A glycan (N-linked (GlcNAc...) asparagine) is linked at Asn-1445. Disordered stretches follow at residues 1530 to 1557 and 1683 to 1704; these read FTVSDSATSPSTLLPTTTNPSTWLPSTN and PTTTTESAKTTTTHSSSTHSEK. 2 stretches are compositionally biased toward low complexity: residues 1537-1557 and 1683-1700; these read TSPSTLLPTTTNPSTWLPSTN and PTTTTESAKTTTTHSSST. One can recognise an LDL-receptor class A 5; truncated domain in the interval 1713–1743; that stretch reads FVCKKMSQIVDIMMRCDRKVDCEDGTDELDC. Disulfide bonds link Cys-1728-Cys-1745, Cys-1734-Cys-1764, Cys-1758-Cys-1773, Cys-1776-Cys-1789, Cys-1783-Cys-1802, and Cys-1796-Cys-1811. An LDL-receptor class A 6; truncated domain is found at 1745 to 1775; it reads CKDYLKGSLKGLICDGKADCEDLTDEQNCVE. The region spanning 1774 to 1813 is the LDL-receptor class A 7 domain; it reads VECQSNEFRCPLSKTCLPLSSRCDNKVDCKFKEDEKDCFA. N-linked (GlcNAc...) asparagine glycans are attached at residues Asn-1878, Asn-1956, and Asn-2023. The Peptidase S1 2 domain occupies 2027–2301; it reads LVNEQLHEAI…LQDIIDKPSC (275 aa). Cys-2055 and Cys-2071 are joined by a disulfide. N-linked (GlcNAc...) asparagine glycosylation is found at Asn-2144, Asn-2173, Asn-2197, Asn-2237, and Asn-2269. Cys-2177 and Cys-2230 form a disulfide bridge. 3 consecutive LDL-receptor class A domains span residues 2308–2346, 2349–2389, and 2419–2459; these read PDCSTHRCPLGTCLPQAAMCNGRSDCHDGSDEEETKCRQ, QQCA…ICSC, and CNCT…YCFG. Disulfide bonds link Cys-2310–Cys-2320, Cys-2315–Cys-2333, Cys-2327–Cys-2344, Cys-2351–Cys-2364, Cys-2358–Cys-2377, and Cys-2371–Cys-2387. The 33-residue stretch at 2387–2419 folds into the LDL-receptor class A 10; truncated domain; it reads CSCFTYLQATDPSKICDGKRNCWDKSDESSVLC. N-linked (GlcNAc...) asparagine glycosylation occurs at Asn-2420. Disulfide bonds link Cys-2421–Cys-2435, Cys-2428–Cys-2448, and Cys-2442–Cys-2457. 2 N-linked (GlcNAc...) asparagine glycosylation sites follow: Asn-2556 and Asn-2601.

Belongs to the peptidase S1 family. Post-translationally, requires cleavage for activation (presumably). As to expression, follicle.

Its subcellular location is the secreted. The protein resides in the extracellular space. It localises to the extracellular matrix. In terms of biological role, component of the extracellular signaling pathway that establishes the dorsal-ventral pathway of the embryo. A protease cascade involving ndl, gd, snk and ea results in activation of the spz Toll receptor ligand; acts upstream of gd, snk and ea and is required for proteolytic processing of gd. Activation of ea requires activation of the ndl-gd-snk protease cascade and sulfation of a vitelline membrane component by pip. Localized activation of the Toll receptor in the ventral region of the embryo defines cell identities along the dorsal-ventral continuum. The sequence is that of Serine protease ndl from Drosophila melanogaster (Fruit fly).